The following is a 258-amino-acid chain: Snake venom serine protease PTLE1 (258 aa).

The N-terminal stretch at methionine 1 to alanine 18 is a signal peptide. Positions glutamine 19 to leucine 24 are excised as a propeptide. Residues valine 25 to alanine 249 form the Peptidase S1 domain. 6 cysteine pairs are disulfide-bonded: cysteine 31/cysteine 163, cysteine 50/cysteine 66, cysteine 98/cysteine 256, cysteine 142/cysteine 210, cysteine 174/cysteine 189, and cysteine 200/cysteine 225. Residue asparagine 44 is glycosylated (N-linked (GlcNAc...) asparagine). The active-site Charge relay system is histidine 65. 2 N-linked (GlcNAc...) asparagine glycosylation sites follow: asparagine 79 and asparagine 103. Residue aspartate 110 is the Charge relay system of the active site. N-linked (GlcNAc...) asparagine glycosylation occurs at asparagine 121. Serine 204 serves as the catalytic Charge relay system.

The protein belongs to the peptidase S1 family. Snake venom subfamily. Monomer. In terms of tissue distribution, expressed by the venom gland.

The protein resides in the secreted. In terms of biological role, snake venom serine protease that may act in the hemostasis system of the prey. The protein is Snake venom serine protease PTLE1 of Gloydius halys (Chinese water mocassin).